The chain runs to 207 residues: Ribosomal RNA small subunit methyltransferase G (207 aa).

S-adenosyl-L-methionine contacts are provided by residues glycine 73, leucine 78, 124–125 (VE), and arginine 139.

The protein belongs to the methyltransferase superfamily. RNA methyltransferase RsmG family.

It localises to the cytoplasm. The enzyme catalyses guanosine(527) in 16S rRNA + S-adenosyl-L-methionine = N(7)-methylguanosine(527) in 16S rRNA + S-adenosyl-L-homocysteine. Its function is as follows. Specifically methylates the N7 position of guanine in position 527 of 16S rRNA. In Escherichia coli (strain SMS-3-5 / SECEC), this protein is Ribosomal RNA small subunit methyltransferase G.